Reading from the N-terminus, the 110-residue chain is Heat shock protein Hsp-12.2 (110 aa).

Positions 15–110 (DWPLQHNDGV…VLTITASKKA (96 aa)) constitute a sHSP domain.

Belongs to the small heat shock protein (HSP20) family.

This Caenorhabditis elegans protein is Heat shock protein Hsp-12.2 (hsp-12.2).